A 93-amino-acid chain; its full sequence is DNA-directed RNA polymerase subunit Rpo11 (93 aa).

It belongs to the archaeal Rpo11/eukaryotic RPB11/RPC19 RNA polymerase subunit family. As to quaternary structure, part of the RNA polymerase complex.

It localises to the cytoplasm. The enzyme catalyses RNA(n) + a ribonucleoside 5'-triphosphate = RNA(n+1) + diphosphate. Functionally, DNA-dependent RNA polymerase (RNAP) catalyzes the transcription of DNA into RNA using the four ribonucleoside triphosphates as substrates. This is DNA-directed RNA polymerase subunit Rpo11 from Methanocella arvoryzae (strain DSM 22066 / NBRC 105507 / MRE50).